Here is a 428-residue protein sequence, read N- to C-terminus: Adenylosuccinate synthetase (428 aa).

GTP is bound by residues 11-17 and 39-41; these read GDEGKGK and GHT. The active-site Proton acceptor is the Asp12. Residues Asp12 and Gly39 each coordinate Mg(2+). Residues 12 to 15, 37 to 40, Thr130, Arg144, Asn226, Thr241, and Arg305 each bind IMP; these read DEGK and NAGH. Residue His40 is the Proton donor of the active site. 301-307 contacts substrate; that stretch reads VTTGRKR. GTP is bound by residues Arg307, 333 to 335, and 415 to 417; these read KLD and GTG.

The protein belongs to the adenylosuccinate synthetase family. In terms of assembly, homodimer. Requires Mg(2+) as cofactor.

It is found in the cytoplasm. The enzyme catalyses IMP + L-aspartate + GTP = N(6)-(1,2-dicarboxyethyl)-AMP + GDP + phosphate + 2 H(+). Its pathway is purine metabolism; AMP biosynthesis via de novo pathway; AMP from IMP: step 1/2. In terms of biological role, plays an important role in the de novo pathway and in the salvage pathway of purine nucleotide biosynthesis. Catalyzes the first committed step in the biosynthesis of AMP from IMP. This is Adenylosuccinate synthetase from Komagataella phaffii (strain GS115 / ATCC 20864) (Yeast).